The sequence spans 229 residues: Deoxyribose-phosphate aldolase (229 aa).

Catalysis depends on Asp-84, which acts as the Proton donor/acceptor. The active-site Schiff-base intermediate with acetaldehyde is the Lys-146. Lys-188 (proton donor/acceptor) is an active-site residue.

Belongs to the DeoC/FbaB aldolase family. DeoC type 1 subfamily.

Its subcellular location is the cytoplasm. The catalysed reaction is 2-deoxy-D-ribose 5-phosphate = D-glyceraldehyde 3-phosphate + acetaldehyde. It functions in the pathway carbohydrate degradation; 2-deoxy-D-ribose 1-phosphate degradation; D-glyceraldehyde 3-phosphate and acetaldehyde from 2-deoxy-alpha-D-ribose 1-phosphate: step 2/2. Its function is as follows. Catalyzes a reversible aldol reaction between acetaldehyde and D-glyceraldehyde 3-phosphate to generate 2-deoxy-D-ribose 5-phosphate. The polypeptide is Deoxyribose-phosphate aldolase (Pyrobaculum neutrophilum (strain DSM 2338 / JCM 9278 / NBRC 100436 / V24Sta) (Thermoproteus neutrophilus)).